Here is a 402-residue protein sequence, read N- to C-terminus: Argininosuccinate synthase (402 aa).

ATP is bound by residues 10-18 (AYSGGLDTS) and alanine 37. L-citrulline is bound by residues tyrosine 88 and serine 93. Position 118 (glycine 118) interacts with ATP. L-aspartate is bound by residues threonine 120, asparagine 124, and aspartate 125. Position 124 (asparagine 124) interacts with L-citrulline. Residues arginine 128, serine 179, serine 188, glutamate 264, and tyrosine 276 each contribute to the L-citrulline site.

This sequence belongs to the argininosuccinate synthase family. Type 1 subfamily. Homotetramer.

The protein resides in the cytoplasm. The catalysed reaction is L-citrulline + L-aspartate + ATP = 2-(N(omega)-L-arginino)succinate + AMP + diphosphate + H(+). Its pathway is amino-acid biosynthesis; L-arginine biosynthesis; L-arginine from L-ornithine and carbamoyl phosphate: step 2/3. The protein is Argininosuccinate synthase of Alkalilimnicola ehrlichii (strain ATCC BAA-1101 / DSM 17681 / MLHE-1).